The following is a 221-amino-acid chain: MTRVKVCGVTDETDLAAVDAAGADAVGAICDVPVDTPREIPRERARELFAAAPPFLTTTLVTMPDSVDHARDLAREVGPDVLQLHGDFAADDLDSLRATGVGVVPVVDATDLARARDLAPVVDAILVDTPSDSGAGGTGETHDWDASRDLVAAVDAPVILAGGLTPDNVVEAVRTVEPYGVDVASGVEASGGVKDHDAVRAFVAAAKTARGAVDDHEEVVA.

The protein belongs to the TrpF family.

The enzyme catalyses N-(5-phospho-beta-D-ribosyl)anthranilate = 1-(2-carboxyphenylamino)-1-deoxy-D-ribulose 5-phosphate. Its pathway is amino-acid biosynthesis; L-tryptophan biosynthesis; L-tryptophan from chorismate: step 3/5. The polypeptide is N-(5'-phosphoribosyl)anthranilate isomerase (trpF) (Haloferax volcanii (strain ATCC 29605 / DSM 3757 / JCM 8879 / NBRC 14742 / NCIMB 2012 / VKM B-1768 / DS2) (Halobacterium volcanii)).